The primary structure comprises 994 residues: Integrator complex subunit 5 (994 aa).

The disordered stretch occupies residues 559–586 (NSNNNNELCNGKDYGKRTKLEPGEDKVD). Over residues 571 to 583 (DYGKRTKLEPGED) the composition is skewed to basic and acidic residues. The next 2 helical transmembrane spans lie at 769–786 (YSLV…DVMY) and 810–826 (AFIN…LIAG).

Belongs to the Integrator subunit 5 family. In terms of assembly, belongs to the multiprotein complex Integrator, at least composed of IntS1, IntS2, IntS3, IntS4, omd/IntS5, IntS6, defl/IntS7, IntS8, IntS9, IntS10, IntS11, IntS12, asun/IntS13, IntS14 and IntS15. The core complex associates with protein phosphatase 2A subunits mts/PP2A and Pp2A-29B, to form the Integrator-PP2A (INTAC) complex.

The protein localises to the nucleus membrane. It localises to the nucleus. Its subcellular location is the cytoplasm. Its function is as follows. Component of the integrator complex, a multiprotein complex that terminates RNA polymerase II (Pol II) transcription in the promoter-proximal region of genes. The integrator complex provides a quality checkpoint during transcription elongation by driving premature transcription termination of transcripts that are unfavorably configured for transcriptional elongation: the complex terminates transcription by (1) catalyzing dephosphorylation of the C-terminal domain (CTD) of Pol II subunit Polr2A/Rbp1 and Spt5, and (2) degrading the exiting nascent RNA transcript via endonuclease activity. The integrator complex is also involved in the 3'-end processing of the U7 snRNA, and also the spliceosomal snRNAs U1, U2, U4 and U5. The chain is Integrator complex subunit 5 from Drosophila melanogaster (Fruit fly).